The sequence spans 103 residues: Large ribosomal subunit protein bL36m (103 aa).

The protein belongs to the bacterial ribosomal protein bL36 family. As to quaternary structure, component of the mitochondrial large ribosomal subunit (mt-LSU). Mature mammalian 55S mitochondrial ribosomes consist of a small (28S) and a large (39S) subunit. The 28S small subunit contains a 12S ribosomal RNA (12S mt-rRNA) and 30 different proteins. The 39S large subunit contains a 16S rRNA (16S mt-rRNA), a copy of mitochondrial valine transfer RNA (mt-tRNA(Val)), which plays an integral structural role, and 52 different proteins. bL36m has a zinc binding site.

Its subcellular location is the mitochondrion. This is Large ribosomal subunit protein bL36m (MRPL36) from Homo sapiens (Human).